The primary structure comprises 120 residues: NAD(P)H-quinone oxidoreductase subunit 3 (120 aa).

Transmembrane regions (helical) follow at residues 6–26 (GYDA…LALV), 64–84 (MFAL…PWAV), and 89–109 (LGLL…VALA).

It belongs to the complex I subunit 3 family. In terms of assembly, NDH-1 can be composed of about 15 different subunits; different subcomplexes with different compositions have been identified which probably have different functions.

It is found in the cellular thylakoid membrane. The catalysed reaction is a plastoquinone + NADH + (n+1) H(+)(in) = a plastoquinol + NAD(+) + n H(+)(out). It carries out the reaction a plastoquinone + NADPH + (n+1) H(+)(in) = a plastoquinol + NADP(+) + n H(+)(out). NDH-1 shuttles electrons from an unknown electron donor, via FMN and iron-sulfur (Fe-S) centers, to quinones in the respiratory and/or the photosynthetic chain. The immediate electron acceptor for the enzyme in this species is believed to be plastoquinone. Couples the redox reaction to proton translocation, and thus conserves the redox energy in a proton gradient. Cyanobacterial NDH-1 also plays a role in inorganic carbon-concentration. This is NAD(P)H-quinone oxidoreductase subunit 3 from Prochlorococcus marinus (strain MIT 9211).